A 432-amino-acid polypeptide reads, in one-letter code: Hexuronate transporter (432 aa).

An N-terminal signal peptide occupies residues 1-31 (MRKIKGLRWYMIALVTLGTVLGYLTRNTVAA). Over 33–48 (APTLMEELNISTQQYS) the chain is Periplasmic. A helical transmembrane segment spans residues 49-69 (YIIAAYSAAYTVMQPVAGYVL). Residues 70–75 (DVLGTK) lie on the Cytoplasmic side of the membrane. Residues 76–96 (IGYAMFAVLWAVFCGATALAG) form a helical membrane-spanning segment. Residues 97 to 99 (SWG) are Periplasmic-facing. The chain crosses the membrane as a helical span at residues 100-120 (GLAVARGAVGAAEAAMIPAGL). At 121-138 (KASSEWFPAKERSIAVGY) the chain is on the cytoplasmic side. A helical membrane pass occupies residues 139-159 (FNVGSSIGAMIAPPLVVWAIV). At 160–164 (MHSWQ) the chain is on the periplasmic side. Residues 165–185 (MAFIISGALSFIWAMAWLIFY) form a helical membrane-spanning segment. Over 186–236 (KHPRDQKHLTDEERDYIINGQEAQHQVSTAKKMSVGQILRNRQFWGIALPR) the chain is Cytoplasmic. Residues 237–257 (FLAEPAWGTFNAWIPLFMFKV) traverse the membrane as a helical segment. Residues 258–264 (YGFNLKE) are Periplasmic-facing. A helical membrane pass occupies residues 265 to 285 (IAMFAWMPMLFADLGCILGGY). Over 286 to 293 (LPPLFQRW) the chain is Cytoplasmic. The helical transmembrane segment at 294 to 314 (FGVNLIVSRKMVVTLGAVLMI) threads the bilayer. The Periplasmic segment spans residues 315–317 (GPG). The helical transmembrane segment at 318 to 338 (MIGLFTNPYVAIMLLCIGGFA) threads the bilayer. The Cytoplasmic portion of the chain corresponds to 339-369 (HQALSGALITLSSDVFGRNEVATANGLTGMS). The chain crosses the membrane as a helical span at residues 370-390 (AWLASTLFALVVGALADTIGF). Position 391 (serine 391) is a topological domain, periplasmic. A helical membrane pass occupies residues 392-412 (PLFAVLAVFDLLGALVIWTVL). Topologically, residues 413-432 (QNKPAIEVAQETHNDPAPQH) are cytoplasmic.

This sequence belongs to the major facilitator superfamily. Phthalate permease family.

The protein resides in the cell inner membrane. The enzyme catalyses aldehydo-D-glucuronate(in) + H(+)(in) = aldehydo-D-glucuronate(out) + H(+)(out). The catalysed reaction is aldehydo-D-galacturonate(out) + H(+)(out) = aldehydo-D-galacturonate(in) + H(+)(in). In terms of biological role, transport of aldohexuronates such as D-glucuronate and D-galacturonate. The protein is Hexuronate transporter (exuT) of Escherichia coli O157:H7.